Reading from the N-terminus, the 216-residue chain is Uracil phosphoribosyltransferase (216 aa).

Residues R85, R110, and 135–143 contribute to the 5-phospho-alpha-D-ribose 1-diphosphate site; that span reads DPMVATGYS. Uracil is bound by residues I200 and 205–207; that span reads GDA. D206 contributes to the 5-phospho-alpha-D-ribose 1-diphosphate binding site.

It belongs to the UPRTase family. Requires Mg(2+) as cofactor.

The enzyme catalyses UMP + diphosphate = 5-phospho-alpha-D-ribose 1-diphosphate + uracil. The protein operates within pyrimidine metabolism; UMP biosynthesis via salvage pathway; UMP from uracil: step 1/1. With respect to regulation, allosterically activated by GTP. Its function is as follows. Catalyzes the conversion of uracil and 5-phospho-alpha-D-ribose 1-diphosphate (PRPP) to UMP and diphosphate. In Burkholderia ambifaria (strain ATCC BAA-244 / DSM 16087 / CCUG 44356 / LMG 19182 / AMMD) (Burkholderia cepacia (strain AMMD)), this protein is Uracil phosphoribosyltransferase.